A 400-amino-acid polypeptide reads, in one-letter code: Large envelope protein (400 aa).

Methionine 1 is subject to N-acetylmethionine. The disordered stretch occupies residues 1–20 (MGGWSAKPRKGMGTNLSVPN). Glycine 2 carries the N-myristoyl glycine; by host lipid modification. A pre-S1 region spans residues 2–119 (GGWSAKPRKG…PPLRDSHPQA (118 aa)). The tract at residues 2–174 (GGWSAKPRKG…SSRTGDPALN (173 aa)) is pre-S. At 2-181 (GGWSAKPRKG…ALNMENITSG (180 aa)) the chain is on the virion surface; in external conformation side. Residues 2–253 (GGWSAKPRKG…PGYRWMCLRR (252 aa)) lie on the Intravirion; in internal conformation side of the membrane. N-linked (GlcNAc...) asparagine glycosylation is present at tryptophan 4. The segment at 120-174 (MQWNSTAFQQALQDPRVRGLFFPAGGSSSGTVNPAPNIASHISSISSRTGDPALN) is pre-S2. A helical transmembrane segment spans residues 182 to 202 (FLGPLLVLQAGFFLLTRILTI). Residues 203 to 253 (PQSLDSWWTSLNFLGGSPVCLGQNSQSPTSNHSPTSCPPICPGYRWMCLRR) are Intravirion; in external conformation-facing. A helical transmembrane segment spans residues 254–274 (FIIFLFILLLCLIFLLVLLDY). Residues 275 to 348 (QGMLPVCPLI…WASVRFSWLS (74 aa)) lie on the Virion surface side of the membrane. N-linked (GlcNAc...) asparagine; by host glycosylation occurs at asparagine 320. The helical transmembrane segment at 349 to 369 (LLVPFVQWFVGLSPTVWLSVI) threads the bilayer. The Intravirion portion of the chain corresponds to 370-375 (WMMWYW). The helical transmembrane segment at 376–398 (GPSLYNILSPFIPLLPIFFCLWV) threads the bilayer. Over 399–400 (YI) the chain is Virion surface.

It belongs to the orthohepadnavirus major surface antigen family. In terms of assembly, in its internal form (Li-HBsAg), interacts with the capsid protein and with the isoform S. Interacts with host chaperone CANX. Associates with host chaperone CANX through its pre-S2 N glycan; this association may be essential for isoform M proper secretion. As to quaternary structure, interacts with isoform L. Interacts with the antigens of satellite virus HDV (HDVAgs); this interaction is required for encapsidation of HDV genomic RNA. In terms of processing, isoform M is N-terminally acetylated by host at a ratio of 90%, and N-glycosylated by host at the pre-S2 region. Myristoylated.

Its subcellular location is the virion membrane. In terms of biological role, the large envelope protein exists in two topological conformations, one which is termed 'external' or Le-HBsAg and the other 'internal' or Li-HBsAg. In its external conformation the protein attaches the virus to cell receptors and thereby initiating infection. This interaction determines the species specificity and liver tropism. This attachment induces virion internalization predominantly through caveolin-mediated endocytosis. The large envelope protein also assures fusion between virion membrane and endosomal membrane. In its internal conformation the protein plays a role in virion morphogenesis and mediates the contact with the nucleocapsid like a matrix protein. Its function is as follows. The middle envelope protein plays an important role in the budding of the virion. It is involved in the induction of budding in a nucleocapsid independent way. In this process the majority of envelope proteins bud to form subviral lipoprotein particles of 22 nm of diameter that do not contain a nucleocapsid. The chain is Large envelope protein from Hepatitis B virus genotype A1 subtype adw2 (isolate Southern-Africa/Cai) (HBV-A).